A 299-amino-acid chain; its full sequence is Foldase protein PrsA (299 aa).

A signal peptide spans M1–A19. C20 is lipidated: N-palmitoyl cysteine. C20 is lipidated: S-diacylglycerol cysteine. Residues N137 to D227 enclose the PpiC domain.

The protein belongs to the PrsA family.

It is found in the cell membrane. The enzyme catalyses [protein]-peptidylproline (omega=180) = [protein]-peptidylproline (omega=0). Functionally, plays a major role in protein secretion by helping the post-translocational extracellular folding of several secreted proteins. The protein is Foldase protein PrsA of Oceanobacillus iheyensis (strain DSM 14371 / CIP 107618 / JCM 11309 / KCTC 3954 / HTE831).